The primary structure comprises 558 residues: MDTLAGILQVASVVLVLVLIHRPLGDLMARMYESRHDSRVERGIYRLIGVDPRSEQTWPAYLRAVLAFSLVGVLVVYGLQRLQAFLPYALGLPAVPEGLSFNTAVSFVTNTNWQSYSPEATMGYTVQLAGLAVQNFVSAAVGIAVAIALVRGFARTRTGTIGNLWVDLIRGSLRLLLPLSLVTAVILIAGGVIQNFAGFQDVATLAGGSQTIPGGPVASQEAIKMLGTNGGGFFNANSAHPFEDPTAWTSAFQVILMLAIPFSLPRTFGKMVGDTRQGTAIVAVMATIFVVSFTALTIFELNGQGTAPMAAGGAMEGKEQRFGIIASTLFGSASTLTSTGAVNSMHDSYTALGGMMPMINMMLGEVAPGGTGSGLYGMLILAVISVFVAGLLVGRTPEYLGKKIGPREIKLASLYILVTPILVLVGTALSFAIPAVRDDVEGTSILNSGLHGLSEVVYAFTSAANNNGSAFAGLTASTPWFNTALGVAMLLGRFLPIVFVLALAGSLAAQDRIPTTSGTLPTHRPQFVGLLIGVTVIVTALTYFPVLALGPLAEGLAS.

11 helical membrane passes run 1 to 21, 59 to 79, 85 to 105, 130 to 150, 179 to 199, 245 to 265, 279 to 299, 374 to 394, 416 to 436, 484 to 504, and 527 to 547; these read MDTL…VLIH, PAYL…VYGL, FLPY…NTAV, GLAV…IALV, LSLV…FAGF, PTAW…FSLP, TAIV…LTIF, GLYG…LLVG, ILVT…IPAV, ALGV…LALA, and FVGL…FPVL.

It belongs to the KdpA family. As to quaternary structure, the system is composed of three essential subunits: KdpA, KdpB and KdpC.

The protein resides in the cell membrane. Part of the high-affinity ATP-driven potassium transport (or Kdp) system, which catalyzes the hydrolysis of ATP coupled with the electrogenic transport of potassium into the cytoplasm. This subunit binds the extracellular potassium ions and delivers the ions to the membrane domain of KdpB through an intramembrane tunnel. In Clavibacter michiganensis subsp. michiganensis (strain NCPPB 382), this protein is Potassium-transporting ATPase potassium-binding subunit.